Reading from the N-terminus, the 369-residue chain is tRNA/tmRNA (uracil-C(5))-methyltransferase (369 aa).

S-adenosyl-L-methionine-binding residues include glutamine 190, tyrosine 218, asparagine 223, glutamate 239, and aspartate 301. The active-site Nucleophile is cysteine 326. The active-site Proton acceptor is the glutamate 360.

Belongs to the class I-like SAM-binding methyltransferase superfamily. RNA M5U methyltransferase family. TrmA subfamily.

The catalysed reaction is uridine(54) in tRNA + S-adenosyl-L-methionine = 5-methyluridine(54) in tRNA + S-adenosyl-L-homocysteine + H(+). It catalyses the reaction uridine(341) in tmRNA + S-adenosyl-L-methionine = 5-methyluridine(341) in tmRNA + S-adenosyl-L-homocysteine + H(+). In terms of biological role, dual-specificity methyltransferase that catalyzes the formation of 5-methyluridine at position 54 (m5U54) in all tRNAs, and that of position 341 (m5U341) in tmRNA (transfer-mRNA). The chain is tRNA/tmRNA (uracil-C(5))-methyltransferase from Vibrio vulnificus (strain YJ016).